The following is a 533-amino-acid chain: Cytochrome P450 monooxygenase ltmK (533 aa).

Residues 27–47 (VHWLQVIVALLVLIVCIFLYW) traverse the membrane as a helical segment. Residue asparagine 116 is glycosylated (N-linked (GlcNAc...) asparagine). Cysteine 473 lines the heme pocket. Residue asparagine 528 is glycosylated (N-linked (GlcNAc...) asparagine).

It belongs to the cytochrome P450 family. It depends on heme as a cofactor.

It is found in the membrane. It functions in the pathway secondary metabolite biosynthesis. Functionally, cytochrome P450 monooxygenase; part of the gene clusters that mediates the biosynthesis of lolitrems, indole-diterpene mycotoxins that are potent tremorgens in mammals, and are synthesized by clavicipitaceous fungal endophytes in association with their grass hosts. The geranylgeranyl diphosphate (GGPP) synthase ltmG is proposed to catalyze the first step in lolitrem biosynthesis. LtmG catalyzes a series of iterative condensations of isopentenyl diphosphate (IPP) with dimethylallyl diphosphate (DMAPP), geranyl diphosphate (GPP), and farnesyl diphosphate (FPP), to form GGPP. GGPP then condenses with indole-3-glycerol phosphate to form 3-geranylgeranylindole, an acyclic intermediate, to be incorporated into paxilline. Either ltmG or ltmC could be responsible for this step, as both are putative prenyl transferases. The FAD-dependent monooxygenase ltmM then catalyzes the epoxidation of the two terminal alkenes of the geranylgeranyl moiety, which is subsequently cyclized by ltmB, to paspaline. The cytochrome P450 monooxygenases ltmQ and ltmP can sequentially oxidize paspaline to terpendole E and terpendole F. Alternatively, ltmP converts paspaline to an intermediate which is oxidized by ltmQ to terpendole F. LtmF, ltmK, ltmE and ltmJ appear to be unique to the epichloe endophytes. The prenyltransferase ltmF is involved in the 27-hydroxyl-O-prenylation. The cytochrome P450 monooxygenase ltmK is required for the oxidative acetal ring formation. The multi-functional prenyltransferase ltmE is required for C20- and C21-prenylations of the indole ring of paspalanes and acts together with the cytochrome P450 monooxygenase ltmJ to yield lolitremanes by multiple oxidations and ring closures. The stereoisomer pairs of lolitriol and lolitrem N or lolitrem B and lolitrem F may be attributed to variations in the way in which ring closure can occur under the action of ltmJ. While the major product of this pathway is lolitrem B, the prenyl transferases and cytochrome P450 monooxygenases identified in this pathway have a remarkable versatility in their regio- and stereo-specificities to generate a diverse range of metabolites that are products of a metabolic grid rather than a linear pathway. This is Cytochrome P450 monooxygenase ltmK from Epichloe festucae var. lolii (Neotyphodium lolii).